Reading from the N-terminus, the 146-residue chain is Ribonuclease P protein component (146 aa).

This sequence belongs to the RnpA family. Consists of a catalytic RNA component (M1 or rnpB) and a protein subunit.

It carries out the reaction Endonucleolytic cleavage of RNA, removing 5'-extranucleotides from tRNA precursor.. RNaseP catalyzes the removal of the 5'-leader sequence from pre-tRNA to produce the mature 5'-terminus. It can also cleave other RNA substrates such as 4.5S RNA. The protein component plays an auxiliary but essential role in vivo by binding to the 5'-leader sequence and broadening the substrate specificity of the ribozyme. This is Ribonuclease P protein component from Chlorobium phaeobacteroides (strain DSM 266 / SMG 266 / 2430).